The following is a 764-amino-acid chain: 5-methyltetrahydropteroyltriglutamate--homocysteine methyltransferase (764 aa).

Residues 16–19 and K121 contribute to the 5-methyltetrahydropteroyltri-L-glutamate site; that span reads RELK. L-homocysteine-binding positions include 440 to 442 and E493; that span reads IGS. Residues 440 to 442 and E493 contribute to the L-methionine site; that span reads IGS. Residues 524–525 and W570 contribute to the 5-methyltetrahydropteroyltri-L-glutamate site; that span reads RC. Residue D608 coordinates L-homocysteine. D608 contributes to the L-methionine binding site. E614 serves as a coordination point for 5-methyltetrahydropteroyltri-L-glutamate. The Zn(2+) site is built by H650, C652, and E674. Catalysis depends on H703, which acts as the Proton donor. Position 735 (C735) interacts with Zn(2+).

This sequence belongs to the vitamin-B12 independent methionine synthase family. Zn(2+) is required as a cofactor.

The catalysed reaction is 5-methyltetrahydropteroyltri-L-glutamate + L-homocysteine = tetrahydropteroyltri-L-glutamate + L-methionine. The protein operates within amino-acid biosynthesis; L-methionine biosynthesis via de novo pathway; L-methionine from L-homocysteine (MetE route): step 1/1. Its function is as follows. Catalyzes the transfer of a methyl group from 5-methyltetrahydrofolate to homocysteine resulting in methionine formation. The protein is 5-methyltetrahydropteroyltriglutamate--homocysteine methyltransferase of Burkholderia orbicola (strain MC0-3).